The following is a 220-amino-acid chain: MKAVGILGSPRKYGNASKMLDAALKELENSGFEVEKVHISSKKINYCTGCGTCLAKGECVQRDDMDELKRLVEESDAVILASPVYYLNVTAQMKTFIDRMLPYGHRPTLKGKYGGSIVVYAGVGKPEEVAGYMNRVLKAWGIVPVGYAVGFGVIPGEVGDEDLKKASQLGSKIAEAFESKYRMEPSDEDLELQKQLLTLIKNYGHLMKADYEFWKEKGFI.

Cys-47, Cys-50, Cys-53, and Cys-59 together coordinate [4Fe-4S] cluster.

It belongs to the SsuE family. Isf subfamily. As to quaternary structure, homodimer. Requires FMN as cofactor. [4Fe-4S] cluster is required as a cofactor.

Redox-active protein probably involved in electron transport. This chain is Iron-sulfur flavoprotein AF_1436, found in Archaeoglobus fulgidus (strain ATCC 49558 / DSM 4304 / JCM 9628 / NBRC 100126 / VC-16).